A 101-amino-acid chain; its full sequence is MTPGELLTDGADLVINSGRRTLTLVVENASDRPIQVGSHYHFAETNAGLSFDRAAARGMRLNIASGTAVRFEPGQQRTIELVDLAGDRQVWGFRGLVQGRL.

Belongs to the urease beta subunit family. Heterotrimer of UreA (gamma), UreB (beta) and UreC (alpha) subunits. Three heterotrimers associate to form the active enzyme.

Its subcellular location is the cytoplasm. It carries out the reaction urea + 2 H2O + H(+) = hydrogencarbonate + 2 NH4(+). It functions in the pathway nitrogen metabolism; urea degradation; CO(2) and NH(3) from urea (urease route): step 1/1. This is Urease subunit beta from Leptothrix cholodnii (strain ATCC 51168 / LMG 8142 / SP-6) (Leptothrix discophora (strain SP-6)).